A 290-amino-acid polypeptide reads, in one-letter code: Small ribosomal subunit protein uS2 (290 aa).

Over residues 263–282 (ATAGATWEAEAGGDWAAESA) the composition is skewed to low complexity. A disordered region spans residues 263–290 (ATAGATWEAEAGGDWAAESAQPNPETKW).

Belongs to the universal ribosomal protein uS2 family. As to quaternary structure, component of the small ribosomal subunit. Mature ribosomes consist of a small (40S) and a large (60S) subunit. The 40S subunit contains about 33 different proteins and 1 molecule of RNA (18S). The 60S subunit contains about 49 different proteins and 3 molecules of RNA (25S, 5.8S and 5S). Interacts with rps21.

Its subcellular location is the cytoplasm. In terms of biological role, required for the assembly and/or stability of the 40S ribosomal subunit. Required for the processing of the 20S rRNA-precursor to mature 18S rRNA in a late step of the maturation of 40S ribosomal subunits. This chain is Small ribosomal subunit protein uS2 (rps0), found in Talaromyces stipitatus (strain ATCC 10500 / CBS 375.48 / QM 6759 / NRRL 1006) (Penicillium stipitatum).